A 366-amino-acid polypeptide reads, in one-letter code: 3-dehydroquinate synthase (366 aa).

NAD(+) is bound by residues 69–74 (DGEAHK), 103–107 (GVIGD), 127–128 (TT), Lys140, Lys149, and 167–170 (TLNT). 3 residues coordinate Zn(2+): Glu182, His245, and His262.

The protein belongs to the sugar phosphate cyclases superfamily. Dehydroquinate synthase family. Co(2+) is required as a cofactor. The cofactor is Zn(2+). Requires NAD(+) as cofactor.

The protein localises to the cytoplasm. It carries out the reaction 7-phospho-2-dehydro-3-deoxy-D-arabino-heptonate = 3-dehydroquinate + phosphate. The protein operates within metabolic intermediate biosynthesis; chorismate biosynthesis; chorismate from D-erythrose 4-phosphate and phosphoenolpyruvate: step 2/7. Its function is as follows. Catalyzes the conversion of 3-deoxy-D-arabino-heptulosonate 7-phosphate (DAHP) to dehydroquinate (DHQ). The protein is 3-dehydroquinate synthase of Pseudomonas fluorescens (strain SBW25).